Reading from the N-terminus, the 184-residue chain is GTP-binding protein Rheb (184 aa).

Residue lysine 8 forms a Glycyl lysine isopeptide (Lys-Gly) (interchain with G-Cter in ubiquitin) linkage. GDP contacts are provided by serine 16, valine 17, glycine 18, lysine 19, serine 20, serine 21, valine 32, and aspartate 33. Serine 16 contributes to the GTP binding site. Residues glycine 18, lysine 19, serine 20, serine 21, and valine 32 each coordinate GTP. Serine 20 provides a ligand contact to Mg(2+). 4 residues coordinate GTP: tyrosine 35, threonine 38, asparagine 119, and aspartate 122. Positions tyrosine 35–phenylalanine 43 match the Effector region motif. Threonine 38 lines the Mg(2+) pocket. Residues asparagine 119 and aspartate 122 each coordinate GDP. Residue serine 130 is modified to Phosphoserine; by MAPKAPK5. GDP is bound at residue alanine 150. Alanine 150 is a GTP binding site. Cysteine 181 carries the post-translational modification Cysteine methyl ester. Cysteine 181 carries S-farnesyl cysteine lipidation. Positions serine 182 to methionine 184 are cleaved as a propeptide — removed in mature form.

This sequence belongs to the small GTPase superfamily. Rheb family. As to quaternary structure, associates with the mTORC1 complex (MTOR, MLST8 and RPTOR) in a guanyl nucleotide-independent manner. Interacts with TSC2. Interacts with MCRS1; the interaction maintains RHEB at the lysosome in its active GTP-bound form and prevents its interaction with the mTORC1 complex inhibitor TSC2, ensuring activation of the mTORC1 complex by RHEB. Interacts (when prenylated) with PDE6D; this promotes release from membranes. In terms of processing, farnesylation is important for efficiently activating mTORC1-mediated signaling. Post-translationally, polyubiquitinated in response to amino acid, promoting its interaction with MTOR and mTORC1 activation. Deubiquitination by ATXN3 promotes recruitment of the TSC-TBC complex and RHEB inactivation by TSC2. Monoubiquitinated at Lys-8 by RNF152, promoting its association with the TSC-TBC complex. Deubiquitinated at Lys-8 by USP4, promoting mTORC1 activation. Phosphorylation by MAPKAPK5 impairs GTP-binding and inactivation. In terms of tissue distribution, ubiquitous. Highest levels observed in skeletal and cardiac muscle.

Its subcellular location is the endomembrane system. The protein localises to the lysosome membrane. The protein resides in the golgi apparatus membrane. It localises to the endoplasmic reticulum membrane. It is found in the cytoplasm. Its subcellular location is the cytosol. The catalysed reaction is GTP + H2O = GDP + phosphate + H(+). Its activity is regulated as follows. Alternates between an inactive form bound to GDP and an active form bound to GTP. Inactivated by the TSC-TBC complex via the GTPase activating protein (GAP) domain of TSC2. Autoinhibited by Tyr-35, which constrains the active site conformation, restricting the access of the catalytic Asp-65 to the nucleotide-binding pocket. Specifically inhibited by NR1 (4-bromo-6-(3,4-dichlorophenylthio)-1-(4-(dimethylcarbamoyl)benzyl)-1H-indole-2-carboxylic acid). Functionally, small GTPase that acts as an allosteric activator of the canonical mTORC1 complex, an evolutionarily conserved central nutrient sensor that stimulates anabolic reactions and macromolecule biosynthesis to promote cellular biomass generation and growth. In response to nutrients, growth factors or amino acids, specifically activates the protein kinase activity of MTOR, the catalytic component of the mTORC1 complex: acts by causing a conformational change that allows the alignment of residues in the active site of MTOR, thereby enhancing the phosphorylation of ribosomal protein S6 kinase (RPS6KB1 and RPS6KB2) and EIF4EBP1 (4E-BP1). RHEB is also required for localization of the TSC-TBC complex to lysosomal membranes. In response to starvation, RHEB is inactivated by the TSC-TBC complex, preventing activation of mTORC1. Has low intrinsic GTPase activity. In Homo sapiens (Human), this protein is GTP-binding protein Rheb.